The sequence spans 130 residues: MSMMNRNIGFLSRTLKTSVPKRAGLLSFRAYSNEAKVNWLEEVQAEEEHAKRSSEFWKKVTYYIGGPALILASANAYYIYCKHQEHAKHVEDTDPGYSFENLRFKKYPWGDGSKTLFWNDKVNHLKKDDE.

The N-terminal 31 residues, 1 to 31 (MSMMNRNIGFLSRTLKTSVPKRAGLLSFRAY), are a transit peptide targeting the mitochondrion. Over 32 to 61 (SNEAKVNWLEEVQAEEEHAKRSSEFWKKVT) the chain is Mitochondrial matrix. Residues 62–80 (YYIGGPALILASANAYYIY) traverse the membrane as a helical segment. At 81-130 (CKHQEHAKHVEDTDPGYSFENLRFKKYPWGDGSKTLFWNDKVNHLKKDDE) the chain is on the mitochondrial intermembrane side.

Belongs to the cytochrome c oxidase subunit 6A family. Component of the cytochrome c oxidase (complex IV, CIV), a multisubunit enzyme composed of a catalytic core of 3 subunits and several supernumerary subunits. The complex exists as a monomer or a dimer and forms supercomplexes (SCs) in the inner mitochondrial membrane with ubiquinol-cytochrome c oxidoreductase (cytochrome b-c1 complex, complex III, CIII).

It localises to the mitochondrion inner membrane. The protein operates within energy metabolism; oxidative phosphorylation. Component of the cytochrome c oxidase, the last enzyme in the mitochondrial electron transport chain which drives oxidative phosphorylation. The respiratory chain contains 3 multisubunit complexes succinate dehydrogenase (complex II, CII), ubiquinol-cytochrome c oxidoreductase (cytochrome b-c1 complex, complex III, CIII) and cytochrome c oxidase (complex IV, CIV), that cooperate to transfer electrons derived from NADH and succinate to molecular oxygen, creating an electrochemical gradient over the inner membrane that drives transmembrane transport and the ATP synthase. Cytochrome c oxidase is the component of the respiratory chain that catalyzes the reduction of oxygen to water. Electrons originating from reduced cytochrome c in the intermembrane space (IMS) are transferred via the dinuclear copper A center (CU(A)) of subunit 2 and heme A of subunit 1 to the active site in subunit 1, a binuclear center (BNC) formed by heme A3 and copper B (CU(B)). The BNC reduces molecular oxygen to 2 water molecules unsing 4 electrons from cytochrome c in the IMS and 4 protons from the mitochondrial matrix. The protein is Cytochrome c oxidase subunit 13, mitochondrial (cox13) of Schizosaccharomyces pombe (strain 972 / ATCC 24843) (Fission yeast).